We begin with the raw amino-acid sequence, 304 residues long: Coenzyme PQQ synthesis protein B (304 aa).

Belongs to the PqqB family.

Its pathway is cofactor biosynthesis; pyrroloquinoline quinone biosynthesis. In terms of biological role, may be involved in the transport of PQQ or its precursor to the periplasm. In Pseudomonas aeruginosa (strain LESB58), this protein is Coenzyme PQQ synthesis protein B.